Here is a 200-residue protein sequence, read N- to C-terminus: 3-isopropylmalate dehydratase small subunit (200 aa).

It belongs to the LeuD family. LeuD type 1 subfamily. As to quaternary structure, heterodimer of LeuC and LeuD.

The enzyme catalyses (2R,3S)-3-isopropylmalate = (2S)-2-isopropylmalate. Its pathway is amino-acid biosynthesis; L-leucine biosynthesis; L-leucine from 3-methyl-2-oxobutanoate: step 2/4. Its function is as follows. Catalyzes the isomerization between 2-isopropylmalate and 3-isopropylmalate, via the formation of 2-isopropylmaleate. The polypeptide is 3-isopropylmalate dehydratase small subunit (Vibrio parahaemolyticus serotype O3:K6 (strain RIMD 2210633)).